Reading from the N-terminus, the 239-residue chain is tRNA (guanine-N(7)-)-methyltransferase (239 aa).

Residues glutamate 69, glutamate 94, aspartate 121, and aspartate 144 each coordinate S-adenosyl-L-methionine. Aspartate 144 is an active-site residue. Lysine 148 is a binding site for substrate. The interaction with RNA stretch occupies residues 150-155; that stretch reads RHNKRR. Residues aspartate 180 and 217–220 contribute to the substrate site; that span reads TKFE.

Belongs to the class I-like SAM-binding methyltransferase superfamily. TrmB family. In terms of assembly, monomer.

It catalyses the reaction guanosine(46) in tRNA + S-adenosyl-L-methionine = N(7)-methylguanosine(46) in tRNA + S-adenosyl-L-homocysteine. It participates in tRNA modification; N(7)-methylguanine-tRNA biosynthesis. Catalyzes the formation of N(7)-methylguanine at position 46 (m7G46) in tRNA. In Yersinia enterocolitica serotype O:8 / biotype 1B (strain NCTC 13174 / 8081), this protein is tRNA (guanine-N(7)-)-methyltransferase.